We begin with the raw amino-acid sequence, 253 residues long: tRNA pseudouridine synthase A (253 aa).

The active-site Nucleophile is the aspartate 53. Residue tyrosine 111 coordinates substrate.

Belongs to the tRNA pseudouridine synthase TruA family. As to quaternary structure, homodimer.

The enzyme catalyses uridine(38/39/40) in tRNA = pseudouridine(38/39/40) in tRNA. In terms of biological role, formation of pseudouridine at positions 38, 39 and 40 in the anticodon stem and loop of transfer RNAs. The polypeptide is tRNA pseudouridine synthase A (Oceanobacillus iheyensis (strain DSM 14371 / CIP 107618 / JCM 11309 / KCTC 3954 / HTE831)).